We begin with the raw amino-acid sequence, 1341 residues long: DNA-directed RNA polymerase subunit Rpo1N (1341 aa).

8 residues coordinate Zn(2+): Cys62, Cys65, Cys72, His75, Cys102, Cys105, Cys149, and Cys152. Residues Asp918, Asp920, and Asp922 each coordinate Mg(2+).

This sequence belongs to the RNA polymerase beta' chain family. In terms of assembly, part of the RNA polymerase complex. Mg(2+) is required as a cofactor. Requires Zn(2+) as cofactor. Post-translationally, this protein undergoes a protein self splicing that involves a post-translational excision of the intervening region (intein) followed by peptide ligation.

The protein resides in the cytoplasm. It catalyses the reaction RNA(n) + a ribonucleoside 5'-triphosphate = RNA(n+1) + diphosphate. DNA-dependent RNA polymerase (RNAP) catalyzes the transcription of DNA into RNA using the four ribonucleoside triphosphates as substrates. Forms the clamp head domain. This is DNA-directed RNA polymerase subunit Rpo1N from Methanocaldococcus jannaschii (strain ATCC 43067 / DSM 2661 / JAL-1 / JCM 10045 / NBRC 100440) (Methanococcus jannaschii).